Here is a 317-residue protein sequence, read N- to C-terminus: Pantothenate kinase (317 aa).

Position 95 to 102 (95 to 102) interacts with ATP; sequence GSVAVGKS.

The protein belongs to the prokaryotic pantothenate kinase family.

The protein resides in the cytoplasm. The catalysed reaction is (R)-pantothenate + ATP = (R)-4'-phosphopantothenate + ADP + H(+). It participates in cofactor biosynthesis; coenzyme A biosynthesis; CoA from (R)-pantothenate: step 1/5. This is Pantothenate kinase from Rhodopseudomonas palustris (strain BisB18).